The chain runs to 660 residues: Septation initiation protein sid4 (660 aa).

Disordered stretches follow at residues 79-243 (TKKE…QQHF), 368-396 (STTV…PDTK), and 459-503 (RHTS…PAKN). Composition is skewed to polar residues over residues 125 to 138 (SFNS…STPY), 156 to 176 (SNSP…QSPK), and 222 to 243 (RPNQ…QQHF). Over residues 384–396 (STKDFKEQKPDTK) the composition is skewed to basic and acidic residues. 2 stretches are compositionally biased toward polar residues: residues 459 to 480 (RHTS…ITTK) and 488 to 497 (KENTMLNDGS).

Homodimer. Interacts with cdc11, sad1, plo1 and dma1.

The protein localises to the cytoplasm. The protein resides in the cytoskeleton. Its subcellular location is the microtubule organizing center. It is found in the spindle pole body. In terms of biological role, required for activation of the spg1 GTPase signaling cascade which leads to the initiation of septation and the subsequent termination of mitosis. May act as a scaffold at the spindle pole body to which other components of the spg1 signaling cascade attach. This chain is Septation initiation protein sid4 (sid4), found in Schizosaccharomyces pombe (strain 972 / ATCC 24843) (Fission yeast).